A 591-amino-acid chain; its full sequence is Acetyltransferase spyB (591 aa).

A glycan (N-linked (GlcNAc...) asparagine) is linked at N114. The next 9 membrane-spanning stretches (helical) occupy residues 123–143 (GTIIWTLKYVPLAASRCLIFL), 168–188 (TLLYALPFLLAQNLVPAILIL), 199–219 (LWIFWSVFVFYQWLQIPISHG), 228–248 (VGVQLFIVILQGFNLVLINPL), 309–329 (SAFLVRQAAIVAWLYLYLNCA), 383–403 (ASILSVGVGLDAPEDWPPLFG), 453–473 (IFFVFLVSGVMHVMSDLLMGI), 481–501 (ILFFCSMAVGVMIEDAVQAAW), and 529–549 (LVGFIWVCVWLSLTTPAWLCP).

This sequence belongs to the wax synthase family.

Its subcellular location is the membrane. The enzyme catalyses sartorypyrone F + acetyl-CoA = sartorypyrone G + CoA. It carries out the reaction sartorypyrone D + acetyl-CoA = sartorypyrone A + CoA. The protein operates within secondary metabolite biosynthesis; terpenoid biosynthesis. Acetyltransferase; part of the gene cluster that mediates the biosynthesis of meroterpenoids called sartorypyrones. SpyB catalyzes the last step of the pathway and is responsible for the acetylation of sartorypyrones D and F to produce sartorypyrones A and G, respectively. The biosynthesis of sartorypyrones begins with the production of triacetic acid lactone (TAL) by the NR-PKS spyA using one molecule of acetyl-CoA and two molecules of malonyl-CoA. The prenyltransferase spyF then conjugates geranylgeranyl pyrophosphate (GGPP) to TAL to form geranylgeranyl-triacetate lactone, for which the pathway-specific geranylgeranyl pyrophosphate synthase (GGPS) spyE is required to provide GGPP. Subsequently, geranylgeranyl-triacetate lactone is epoxidized at the terminal olein by the FAD-dependent monooxygenase spyC, followed by cyclization of the terpenoid component catalyzed by the terpene cyclase spyD to produce both the bicyclic sartorypyrone F and the monocyclic sartorypyrone D. Finally, the last step of the biosynthesis involves the acetylation of the meroterpenoids sartorypyrones D and F by the acetyltransferase SpyB to produce sartorypyrones A and G, respectively. The sequence is that of Acetyltransferase spyB from Aspergillus fumigatus (strain ATCC MYA-4609 / CBS 101355 / FGSC A1100 / Af293) (Neosartorya fumigata).